Here is a 204-residue protein sequence, read N- to C-terminus: Small ribosomal subunit protein uS7 (204 aa).

Belongs to the universal ribosomal protein uS7 family. In terms of assembly, part of the 30S ribosomal subunit.

Functionally, one of the primary rRNA binding proteins, it binds directly to 16S rRNA where it nucleates assembly of the head domain of the 30S subunit. Is located at the subunit interface close to the decoding center. In Methanoregula boonei (strain DSM 21154 / JCM 14090 / 6A8), this protein is Small ribosomal subunit protein uS7.